The sequence spans 285 residues: MGLAAPRKKIKISHDPNNTNWSRSTSGFGHKILSSQGWTPGSFLGARNAAHAEMFTAASASHIKVVLKDDTLGLGARPKRDPLNEPTGLDAFKGLLGRLNGKSDADLQVEQQKRDNVKLARYAATKWQAVTFISGGLLAQEKTTPIVTEEPQGIHKDKQEDKLSATVPGPDSDGVEGSDNIGGQSDQSIKKKKSKSKNHREKKDRKRKHTEEPESTDSGNTNKRSTEKKSKATRDDEESSSTTSKGLSRERRPMGRHVFRGRHIAQKKAALMDEKSLNEIFMVKS.

Basic residues predominate over residues 1–11; sequence MGLAAPRKKIK. The tract at residues 1-23 is disordered; the sequence is MGLAAPRKKIKISHDPNNTNWSR. In terms of domain architecture, G-patch spans 25–79; the sequence is TSGFGHKILSSQGWTPGSFLGARNAAHAEMFTAASASHIKVVLKDDTLGLGARPK. A disordered region spans residues 144-263; the sequence is TPIVTEEPQG…MGRHVFRGRH (120 aa). A compositionally biased stretch (basic and acidic residues) spans 152–163; sequence QGIHKDKQEDKL. The span at 190–208 shows a compositional bias: basic residues; the sequence is KKKKSKSKNHREKKDRKRK. Residues 224–234 show a composition bias toward basic and acidic residues; sequence RSTEKKSKATR. The segment covering 254–263 has biased composition (basic residues); that stretch reads MGRHVFRGRH.

Belongs to the PINX1 family.

It is found in the nucleus. It localises to the nucleolus. In terms of biological role, involved in rRNA-processing at A0, A1 and A2 sites and negatively regulates telomerase. The sequence is that of Protein pxr1 (pxr1) from Aspergillus niger (strain ATCC MYA-4892 / CBS 513.88 / FGSC A1513).